A 185-amino-acid polypeptide reads, in one-letter code: MKTAMELRSGNVIMVGADPLVVQKSEYNKSGRNAAVVKMKLKNLLTGAASEAVYKADDKFEVVVLDKKEVTYSYFADPMYVFMDADYEQFEVEAENMTDALKYLEDGLACEVVFYNGKAISVELPNSVVREVVYTEPAVKGDTSGKVMKPAKLATGFELPVPAFVSIGDKIEIDTRTDEYKNRVK.

Belongs to the elongation factor P family.

It localises to the cytoplasm. It functions in the pathway protein biosynthesis; polypeptide chain elongation. In terms of biological role, involved in peptide bond synthesis. Stimulates efficient translation and peptide-bond synthesis on native or reconstituted 70S ribosomes in vitro. Probably functions indirectly by altering the affinity of the ribosome for aminoacyl-tRNA, thus increasing their reactivity as acceptors for peptidyl transferase. The polypeptide is Elongation factor P (Dechloromonas aromatica (strain RCB)).